Consider the following 159-residue polypeptide: Probable NADH dehydrogenase [ubiquinone] 1 alpha subcomplex subunit 12 (159 aa).

The protein belongs to the complex I NDUFA12 subunit family. As to quaternary structure, complex I is composed of at least 49 different subunits.

Its subcellular location is the mitochondrion inner membrane. In terms of biological role, accessory subunit of the mitochondrial membrane respiratory chain NADH dehydrogenase (Complex I), that is believed not to be involved in catalysis. Complex I functions in the transfer of electrons from NADH to the respiratory chain. The immediate electron acceptor for the enzyme is believed to be ubiquinone. This is Probable NADH dehydrogenase [ubiquinone] 1 alpha subcomplex subunit 12 from Arabidopsis thaliana (Mouse-ear cress).